The chain runs to 347 residues: NADH-ubiquinone oxidoreductase chain 2 (347 aa).

The next 11 membrane-spanning stretches (helical) occupy residues 2–22, 26–46, 60–80, 94–114, 127–147, 151–171, 179–197, 201–223, 242–262, 274–294, and 325–345; these read LSPLIQSTLLMTLGLGTLVTF, SWILAWIGLEINTIAIIPLMA, YFIAQSAGSATLLVTACLAAW, IILNAMTLALMFKLGMAPMHF, TGMILATWQKLAPITLLIQIA, NNAFILGPALLSVFVGGWGGL, IIAYSSIAHMGWIASMAPF, ITWVTTLIYCLLTSTTFINLNTL, MLLLLLLLSLGGLPPLTGFTN, NLVIYLFMMMMGSLLSLFFYT, and LMTMLSINLFILTPQLMAIFI.

Belongs to the complex I subunit 2 family.

The protein resides in the mitochondrion inner membrane. The catalysed reaction is a ubiquinone + NADH + 5 H(+)(in) = a ubiquinol + NAD(+) + 4 H(+)(out). Its function is as follows. Core subunit of the mitochondrial membrane respiratory chain NADH dehydrogenase (Complex I) that is believed to belong to the minimal assembly required for catalysis. Complex I functions in the transfer of electrons from NADH to the respiratory chain. The immediate electron acceptor for the enzyme is believed to be ubiquinone. The polypeptide is NADH-ubiquinone oxidoreductase chain 2 (MT-ND2) (Lampetra fluviatilis (European river lamprey)).